A 284-amino-acid chain; its full sequence is 2,3,4,5-tetrahydropyridine-2,6-dicarboxylate N-succinyltransferase (284 aa).

Residues Arg111 and Asp148 each contribute to the substrate site.

The protein belongs to the transferase hexapeptide repeat family. In terms of assembly, homotrimer.

The protein resides in the cytoplasm. It carries out the reaction (S)-2,3,4,5-tetrahydrodipicolinate + succinyl-CoA + H2O = (S)-2-succinylamino-6-oxoheptanedioate + CoA. It functions in the pathway amino-acid biosynthesis; L-lysine biosynthesis via DAP pathway; LL-2,6-diaminopimelate from (S)-tetrahydrodipicolinate (succinylase route): step 1/3. This is 2,3,4,5-tetrahydropyridine-2,6-dicarboxylate N-succinyltransferase from Chelativorans sp. (strain BNC1).